The chain runs to 360 residues: uncharacterized protein (360 aa).

Residues 4 to 235 (LSLQHIQKIY…PANMFVAGFI (232 aa)) enclose the ABC transporter domain. 37–44 (GPSGCGKS) lines the ATP pocket.

It belongs to the ABC transporter superfamily.

This is an uncharacterized protein from Escherichia coli O6:K15:H31 (strain 536 / UPEC).